A 640-amino-acid chain; its full sequence is F-box protein MET30 (640 aa).

Over residues 1 to 19 the composition is skewed to basic and acidic residues; that stretch reads MRRERQRMMSFEDKDKDDL. The disordered stretch occupies residues 1–84; sequence MRRERQRMMS…ATNDSGTRVQ (84 aa). Positions 1–299 are necessary to mediate nuclear localization; sequence MRRERQRMMS…KGHCRIQEFK (299 aa). Composition is skewed to polar residues over residues 45 to 56 and 64 to 82; these read TGSSDDLAQGSS and ATRSPSSSPDLATNDSGTR. At serine 67 the chain carries Phosphoserine. The segment at 180–225 is interaction with SKP1/CBF3D; sequence KIDFISILPQELSLKILSYLDCQSLCNATRVCRKWQKLADDDRVWY. Residues 180–277 form an important for mediating homomultimerization region; it reads KIDFISILPQ…TQTTRPWKVI (98 aa). One can recognise an F-box domain in the interval 181–227; sequence IDFISILPQELSLKILSYLDCQSLCNATRVCRKWQKLADDDRVWYHM. Positions 277-640 are interaction with MET4; that stretch reads IYRERFKVES…VKMYKFDLND (364 aa). WD repeat units lie at residues 300–328, 340–368, 380–408, 419–449, 461–499, 509–538, 550–578, and 607–635; these read GHMDGVLTLQFNYRLLFTGSYDSTIGIWD, GHSDGVKTLYFDDRKLITGSLDKTIRVWN, GHSDSVLSVDSYQKVIVSGSADKTVKVWH, GHTEWVNCVKLHPKSFSCFSCSDDTTIRMWD, GHVGQVQKIIPLTIKDVENLATDNTSDGSSPQDDPTMTD, NEQETVLDENIPYPTHLLSCGLDNTIKLWD, GHVEGVWDIAADNFRIISGSHDGSIKVWD, and DKVAPIACVCIGDSECFSGDEFGCVKMYK. A compositionally biased stretch (polar residues) spans 481 to 495; that stretch reads ATDNTSDGSSPQDDP. The disordered stretch occupies residues 481-516; the sequence is ATDNTSDGSSPQDDPTMTDGADESDTPSNEQETVLD.

It belongs to the WD repeat MET30/SCONB/SCON-2 family. Homomultimer. Interacts with CDC53 and SKP1/CBF3D to form the E3 ubiquitin ligase complex SCF(Met30). Interacts with MET4.

Its subcellular location is the cytoplasm. It is found in the nucleus. It participates in protein modification; protein ubiquitination. Its function is as follows. Substrate-recognition component of the SCF(Met30) complex, an E3 ubiquitin ligase complex that mediates the ubiquitination and subsequent proteasomal degradation of target proteins. Negatively regulates sulfur amino acids biosynthesis genes expression. Controls cell cycle function (being required for the G1/S transition and M-phase but not the S-phase), sulfur metabolism, and methionine biosynthesis as part of the SCF(Met30) complex. Required for the efficient binding of CDC45 and MCM proteins to origins of replication. Required for efficient expression of G1 cyclins. The SCF(Met30) complex catalyzes ubiquitination and degradation of the Cdk-inhibitory kinase SWE1. Involved in the S-adenosylmethionine (AdoMet)-mediated inhibition of the transcription function of MET4. The SCF(Met30) complex mediates ubiquitination and subsequent degradation of MET4 and the cellular response to cadmium. The SCF(Met30) complex acts as an inhibitor of autophagy by promoting ubiquitination and degradation of ATG9 in normal conditions. This Saccharomyces cerevisiae (strain ATCC 204508 / S288c) (Baker's yeast) protein is F-box protein MET30.